We begin with the raw amino-acid sequence, 375 residues long: All-trans-retinol dehydrogenase [NAD(+)] ADH1B (375 aa).

Residue Ser-2 is modified to N-acetylserine. Ser-23 carries the phosphoserine modification. The residue at position 35 (Tyr-35) is a Phosphotyrosine. Residues Cys-47, His-68, Cys-98, Cys-101, Cys-104, Cys-112, and Cys-175 each contribute to the Zn(2+) site. Residues 200–205 (GLGGVG), Asp-224, Lys-229, 293–295 (VGV), and Arg-370 contribute to the NAD(+) site.

It belongs to the zinc-containing alcohol dehydrogenase family. Homodimer or heterodimer of closely related subunits. The cofactor is Zn(2+).

Its subcellular location is the cytoplasm. The catalysed reaction is all-trans-retinol + NAD(+) = all-trans-retinal + NADH + H(+). It catalyses the reaction all-trans-4-hydroxyretinol + NAD(+) = all-trans-4-hydroxyretinal + NADH + H(+). The enzyme catalyses all-trans-4-oxoretinol + NAD(+) = all-trans-4-oxoretinal + NADH + H(+). Catalyzes the NAD-dependent oxidation of all-trans-retinol and its derivatives such as all-trans-4-hydroxyretinol and may participate in retinoid metabolism. In vitro can also catalyze the NADH-dependent reduction of all-trans-retinal and its derivatives such as all-trans-4-oxoretinal. Catalyzes in the oxidative direction with higher efficiency. Has the same affinity for all-trans-4-hydroxyretinol and all-trans-4-oxoretinal. This is All-trans-retinol dehydrogenase [NAD(+)] ADH1B from Pan troglodytes (Chimpanzee).